The chain runs to 170 residues: Single-stranded DNA-binding protein (170 aa).

An oligomerization region spans residues 1-26; sequence MSNELKQVEQTEEAVVVSETKDYIKV.

Belongs to the phi29likevirus single-strand-binding protein family. As to quaternary structure, hexamer.

In terms of biological role, single-stranded DNA-binding protein required for the elongation during viral DNA replication by strand displacement. Displaced viral DNA strands are transiently coated with the ssDNA-binding protein and therefore protected againt nucleases. The latter is then probably removed by the replisome that performs lagging strand synthesis or during the events that lead up to the recombination process. Has helix-destabilizing activity since it removes secondary structure from the ssDNA in replicative intermediates. The sequence is that of Single-stranded DNA-binding protein from Bacillus subtilis (Bacteriophage GA-1).